The primary structure comprises 593 residues: F-box/LRR-repeat protein 17 (593 aa).

The region spanning 120–177 (DLDLQLDTDIVQPGRFHAVGLWEVLKRLPPSSLLMAARVCKGWRETSRKMWKAAEELR) is the F-box domain. LRR repeat units lie at residues 178–206 (IRVP…SLKI), 207–232 (ESDF…EITT), 237–262 (VNRI…KMEG), 276–304 (LSTL…SLEF), 335–361 (SLKL…SLVL), 362–387 (GINI…DLSG), 414–439 (CPNI…DCGM), 477–502 (LSLW…NLNL), and 503–525 (CSNL…YASG).

As to quaternary structure, part of a SCF (ASK-cullin-F-box) protein ligase complex. Interacts with SKP1A/ASK1, KRP4, KRP6 and KRP7. Expressed in developing pollen.

Its subcellular location is the nucleus. It participates in protein modification; protein ubiquitination. In terms of biological role, essential protein for male fertility. Component of the SCF(ASK-cullin-F-box) E3 ubiquitin ligase complex SCF(FBL17), which mediates the ubiquitination and subsequent proteasomal degradation of target proteins. Enables the switch in cell cycle control leading to male germ cell lineage formation from microspores after meiosis. Targets CDKA-1 inhibitors the degradation specifically in male germ cells (e.g. KRP6 and KRP7) and thus enables CDKA-1 activation and germ cell S-phase progression. Promotes twin sperm cell production and double fertilization. This chain is F-box/LRR-repeat protein 17 (FBL17), found in Arabidopsis thaliana (Mouse-ear cress).